A 137-amino-acid chain; its full sequence is Large ribosomal subunit protein uL16 (137 aa).

It belongs to the universal ribosomal protein uL16 family. Part of the 50S ribosomal subunit.

Its function is as follows. Binds 23S rRNA and is also seen to make contacts with the A and possibly P site tRNAs. This Psychrobacter cryohalolentis (strain ATCC BAA-1226 / DSM 17306 / VKM B-2378 / K5) protein is Large ribosomal subunit protein uL16.